A 258-amino-acid chain; its full sequence is Cytosolic Fe-S cluster assembly factor Nubp2 homolog (258 aa).

14-21 (GKGGVGKS) is a binding site for ATP. [4Fe-4S] cluster contacts are provided by Cys188 and Cys191.

Belongs to the Mrp/NBP35 ATP-binding proteins family. NUBP2/CFD1 subfamily. Heterotetramer of 2 Nubp1 and 2 Nubp2 chains. Requires [4Fe-4S] cluster as cofactor.

The protein resides in the cytoplasm. Its function is as follows. Component of the cytosolic iron-sulfur (Fe/S) protein assembly (CIA) machinery. Required for maturation of extramitochondrial Fe-S proteins. The Nubp1-Nubp2 heterotetramer forms a Fe-S scaffold complex, mediating the de novo assembly of an Fe-S cluster and its transfer to target apoproteins. This chain is Cytosolic Fe-S cluster assembly factor Nubp2 homolog, found in Drosophila pseudoobscura pseudoobscura (Fruit fly).